Reading from the N-terminus, the 382-residue chain is Transcription termination/antitermination protein NusA (382 aa).

The 65-residue stretch at 135–199 folds into the S1 motif domain; sequence EDIMTGIVQR…KGPQIMISRT (65 aa). A KH domain is found at 301–367; sequence EKTTQVIVPD…TLALDQETAD (67 aa). Residues 348–382 are disordered; it reads LLEDEAASHETLALDQETADQPEATVETSKNHEEE.

Belongs to the NusA family. Monomer. Binds directly to the core enzyme of the DNA-dependent RNA polymerase and to nascent RNA.

It localises to the cytoplasm. Its function is as follows. Participates in both transcription termination and antitermination. In Halalkalibacterium halodurans (strain ATCC BAA-125 / DSM 18197 / FERM 7344 / JCM 9153 / C-125) (Bacillus halodurans), this protein is Transcription termination/antitermination protein NusA.